We begin with the raw amino-acid sequence, 571 residues long: Leucine aminopeptidase A1, chloroplastic (571 aa).

The transit peptide at 1 to 53 (MATLRVSSLFASSSSSLHSNPSVFTKYQSSPKWAFSFPVTPLCSKRSKRIVHC) directs the protein to the chloroplast. The Mg(2+) site is built by Lys-342 and Asp-347. Lys-354 is an active-site residue. The Mg(2+) site is built by Asp-367, Asp-427, and Glu-429. The active site involves Arg-431.

It belongs to the peptidase M17 family. Homohexamer (dimer of homotrimers). Requires Mg(2+) as cofactor. As to expression, observed during floral development. Expressed in healthy and senescent leaves, cotyledons (emergence from seed coats), pistils, sepals, petals, stamens, and floral buds (at protein level). Present at very low levels in healthy leaves.

It is found in the plastid. The protein localises to the chloroplast. The catalysed reaction is Release of an N-terminal amino acid, Xaa-|-Yaa-, in which Xaa is preferably Leu, but may be other amino acids including Pro although not Arg or Lys, and Yaa may be Pro. Amino acid amides and methyl esters are also readily hydrolyzed, but rates on arylamides are exceedingly low.. The enzyme catalyses Release of N-terminal proline from a peptide.. Catalyzes the removal of unsubstituted N-terminal amino acids from various peptides. When associated as homohexamer, catalyzes the proteolyzes of Xaa-Leu dipeptides. Possesses leucine aminopeptidase activity against the model substrate leucine-amido methyl coumarin. Presumably involved in the processing and regular turnover of intracellular proteins. Regulates wound signaling and has a role in insect defense. Functionally, functions as a molecular chaperone to protect proteins from heat-induced damage. In Solanum lycopersicum (Tomato), this protein is Leucine aminopeptidase A1, chloroplastic.